Reading from the N-terminus, the 258-residue chain is Phosphate import ATP-binding protein PstB (258 aa).

The ABC transporter domain occupies 5-247 (LDLKGVNIYY…EKIFSNPTEK (243 aa)). 37 to 44 (GASGCGKT) serves as a coordination point for ATP.

Belongs to the ABC transporter superfamily. Phosphate importer (TC 3.A.1.7) family. The complex is composed of two ATP-binding proteins (PstB), two transmembrane proteins (PstC and PstA) and a solute-binding protein (PstS).

Its subcellular location is the cell membrane. The enzyme catalyses phosphate(out) + ATP + H2O = ADP + 2 phosphate(in) + H(+). Functionally, part of the ABC transporter complex PstSACB involved in phosphate import. Responsible for energy coupling to the transport system. The sequence is that of Phosphate import ATP-binding protein PstB from Mycobacterium leprae (strain TN).